The following is a 289-amino-acid chain: Diaminopimelate epimerase (289 aa).

The substrate site is built by asparagine 11 and asparagine 78. Cysteine 87 serves as the catalytic Proton donor. Substrate is bound by residues 88 to 89 (GN), asparagine 163, asparagine 199, and 217 to 218 (ER). Cysteine 226 (proton acceptor) is an active-site residue. 227 to 228 (GT) is a binding site for substrate.

This sequence belongs to the diaminopimelate epimerase family. In terms of assembly, homodimer.

It is found in the cytoplasm. The enzyme catalyses (2S,6S)-2,6-diaminopimelate = meso-2,6-diaminopimelate. It participates in amino-acid biosynthesis; L-lysine biosynthesis via DAP pathway; DL-2,6-diaminopimelate from LL-2,6-diaminopimelate: step 1/1. In terms of biological role, catalyzes the stereoinversion of LL-2,6-diaminopimelate (L,L-DAP) to meso-diaminopimelate (meso-DAP), a precursor of L-lysine and an essential component of the bacterial peptidoglycan. The protein is Diaminopimelate epimerase of Mycobacterium bovis (strain ATCC BAA-935 / AF2122/97).